Consider the following 119-residue polypeptide: MLHWGPKFWRALHLYAIFFSDAPNWKEKYEAIQWILNFIESLPCTMCRHHAFSYLTKNPLTLNNSEDFQYWTFAFHNNVNKRLNKKIISWSEYKNIYEQSILKTIEYGKTDFIGAWSSL.

An ERV/ALR sulfhydryl oxidase domain is found at 1–97 (MLHWGPKFWR…ISWSEYKNIY (97 aa)). A disulfide bridge connects residues Cys-44 and Cys-47.

The protein belongs to the asfivirus B119L family. Interacts with A151R. FAD serves as cofactor.

The protein resides in the host cytoplasm. It localises to the virion. It catalyses the reaction 2 R'C(R)SH + O2 = R'C(R)S-S(R)CR' + H2O2. Functionally, FAD-dependent sulfhydryl oxidase that catalyzes the formation of disulfide bonds in viral proteins produced in the cell cytoplasm. This chain is FAD-linked sulfhydryl oxidase, found in Ornithodoros (relapsing fever ticks).